Here is a 440-residue protein sequence, read N- to C-terminus: Syntrophin-1 (440 aa).

PH domains follow at residues 2-208 (AAVR…ACTT) and 227-340 (QVRH…IGGY). Residues 45 to 128 (TVRVVKYDGN…VVDLQVQYRR (84 aa)) form the PDZ domain. In terms of domain architecture, SU spans 384–440 (SFETIRATGDDGGRFLWVDFGPPHGEQELDLLNSAKPVVFILHSFLATKVYRLGLYA).

Belongs to the syntrophin family. Component of the dystrophin glycoprotein complex (DGC). Interacts with dyb-1, dys-1 and snf-6 to form the DGC. Expressed in neurons and muscles; particularly strong expression in the body wall, head and vulval muscles, and in ventral nerve cord (at protein level).

The protein localises to the membrane. It is found in the cytoplasm. Its subcellular location is the cytoskeleton. Functionally, adapter protein that binds to and probably organizes the subcellular localization of a variety of membrane proteins. May link various receptors to the actin cytoskeleton and the dystrophin glycoprotein complex (DGC). May also act by slowing calcium channel activity via a direct or indirect mechanism potentially involving other second messengers. Plays an early role in the formation of the neuromuscular junction and is necessary for muscle maintenance. In Caenorhabditis elegans, this protein is Syntrophin-1.